The chain runs to 163 residues: Nucleotide-binding protein GK0742 (163 aa).

It belongs to the YajQ family.

Functionally, nucleotide-binding protein. The chain is Nucleotide-binding protein GK0742 from Geobacillus kaustophilus (strain HTA426).